The primary structure comprises 335 residues: MESSFSFGVILAVLASLIIATNTLVAVAVLLLIHKNDGVSLCFTLNLAVADTLIGVAISGLLTDQLSSPSRPTQKTLCSLRMAFVTSSAAASVLTVMLITFDRYLAIKQPFRYLKIMSGFVAGACIAGLWLVSYLIGFLPLGIPMFQQTAYKGQCSFFAVFHPHFVLTLSCVGFFPAMLLFVFFYCDMLKIASMHSQQIRKMEHAGAMAGGYRSPRTPSDFKALRTVSVLIGSFALSWTPFLITGIVQVACQECHLYLVLERYLWLLGVGNSLLNPLIYAYWQKEVRLQLYHMALGVKKVLTSFLLFLSARNCGPERPRESSCHIVTISSSEFDG.

Residues 1 to 12 are Extracellular-facing; it reads MESSFSFGVILA. Residues 13–33 form a helical membrane-spanning segment; that stretch reads VLASLIIATNTLVAVAVLLLI. At 34 to 37 the chain is on the cytoplasmic side; sequence HKND. A helical transmembrane segment spans residues 38-58; it reads GVSLCFTLNLAVADTLIGVAI. Residues 59–81 lie on the Extracellular side of the membrane; it reads SGLLTDQLSSPSRPTQKTLCSLR. The chain crosses the membrane as a helical span at residues 82–102; it reads MAFVTSSAAASVLTVMLITFD. Residues 103-125 lie on the Cytoplasmic side of the membrane; it reads RYLAIKQPFRYLKIMSGFVAGAC. A helical transmembrane segment spans residues 126-146; sequence IAGLWLVSYLIGFLPLGIPMF. Over 147–164 the chain is Extracellular; the sequence is QQTAYKGQCSFFAVFHPH. The helical transmembrane segment at 165 to 185 threads the bilayer; it reads FVLTLSCVGFFPAMLLFVFFY. Residues 186-226 lie on the Cytoplasmic side of the membrane; the sequence is CDMLKIASMHSQQIRKMEHAGAMAGGYRSPRTPSDFKALRT. Residues 227–247 form a helical membrane-spanning segment; sequence VSVLIGSFALSWTPFLITGIV. Over 248–262 the chain is Extracellular; the sequence is QVACQECHLYLVLER. A helical transmembrane segment spans residues 263-283; the sequence is YLWLLGVGNSLLNPLIYAYWQ. Over 284 to 335 the chain is Cytoplasmic; the sequence is KEVRLQLYHMALGVKKVLTSFLLFLSARNCGPERPRESSCHIVTISSSEFDG.

The protein belongs to the G-protein coupled receptor 1 family. Predominantly expressed in the pancreas, especially in the islets.

It is found in the cell membrane. Its function is as follows. Receptor for the endogenous fatty-acid ethanolamide oleoylethanolamide (OEA) and lysophosphatidylcholine (LPC). Functions as a glucose-dependent insulinotropic receptor. The activity of this receptor is mediated by G proteins which activate adenylate cyclase. Seems to act through a G(s) mediated pathway. The polypeptide is Glucose-dependent insulinotropic receptor (GPR119) (Homo sapiens (Human)).